The sequence spans 126 residues: Large ribosomal subunit protein uL22 (126 aa).

Belongs to the universal ribosomal protein uL22 family. As to quaternary structure, part of the 50S ribosomal subunit.

Its function is as follows. This protein binds specifically to 23S rRNA; its binding is stimulated by other ribosomal proteins, e.g. L4, L17, and L20. It is important during the early stages of 50S assembly. It makes multiple contacts with different domains of the 23S rRNA in the assembled 50S subunit and ribosome. The globular domain of the protein is located near the polypeptide exit tunnel on the outside of the subunit, while an extended beta-hairpin is found that lines the wall of the exit tunnel in the center of the 70S ribosome. This Sphingopyxis alaskensis (strain DSM 13593 / LMG 18877 / RB2256) (Sphingomonas alaskensis) protein is Large ribosomal subunit protein uL22.